The chain runs to 194 residues: Inosine triphosphate pyrophosphatase (194 aa).

11–16 (TGNAKK) contributes to the ITP binding site. Residue E39 coordinates Mg(2+). ITP contacts are provided by residues K51, 67–68 (DT), K84, 143–146 (FGWD), K166, and 171–172 (HR).

Belongs to the HAM1 NTPase family. Homodimer. It depends on Mg(2+) as a cofactor. Mn(2+) is required as a cofactor.

It localises to the cytoplasm. The catalysed reaction is ITP + H2O = IMP + diphosphate + H(+). It carries out the reaction dITP + H2O = dIMP + diphosphate + H(+). It catalyses the reaction XTP + H2O = XMP + diphosphate + H(+). Functionally, pyrophosphatase that hydrolyzes non-canonical purine nucleotides such as inosine triphosphate (ITP), deoxyinosine triphosphate (dITP) or xanthosine 5'-triphosphate (XTP) to their respective monophosphate derivatives. The enzyme does not distinguish between the deoxy- and ribose forms. Probably excludes non-canonical purines from RNA and DNA precursor pools, thus preventing their incorporation into RNA and DNA and avoiding chromosomal lesions. In Dictyostelium discoideum (Social amoeba), this protein is Inosine triphosphate pyrophosphatase (itpa).